Here is a 116-residue protein sequence, read N- to C-terminus: Large ribosomal subunit protein bL19 (116 aa).

The protein belongs to the bacterial ribosomal protein bL19 family.

Functionally, this protein is located at the 30S-50S ribosomal subunit interface and may play a role in the structure and function of the aminoacyl-tRNA binding site. This Mycoplasmopsis agalactiae (strain NCTC 10123 / CIP 59.7 / PG2) (Mycoplasma agalactiae) protein is Large ribosomal subunit protein bL19.